The chain runs to 2271 residues: Protein Ycf2 (2271 aa).

An ATP-binding site is contributed by 1628–1635; the sequence is GSIGTGRS.

This sequence belongs to the Ycf2 family.

The protein localises to the plastid. It is found in the chloroplast stroma. Its function is as follows. Probable ATPase of unknown function. Its presence in a non-photosynthetic plant (Epifagus virginiana) and experiments in tobacco indicate that it has an essential function which is probably not related to photosynthesis. In Illicium oligandrum (Star anise), this protein is Protein Ycf2.